The sequence spans 317 residues: Transaldolase (317 aa).

K132 acts as the Schiff-base intermediate with substrate in catalysis.

The protein belongs to the transaldolase family. Type 1 subfamily. Homodimer.

It is found in the cytoplasm. It catalyses the reaction D-sedoheptulose 7-phosphate + D-glyceraldehyde 3-phosphate = D-erythrose 4-phosphate + beta-D-fructose 6-phosphate. The protein operates within carbohydrate degradation; pentose phosphate pathway; D-glyceraldehyde 3-phosphate and beta-D-fructose 6-phosphate from D-ribose 5-phosphate and D-xylulose 5-phosphate (non-oxidative stage): step 2/3. In terms of biological role, transaldolase is important for the balance of metabolites in the pentose-phosphate pathway. This is Transaldolase (talB) from Escherichia coli O104:H4 (strain 2009EL-2071).